Consider the following 185-residue polypeptide: Peptidyl-tRNA hydrolase (185 aa).

Phe12 provides a ligand contact to tRNA. His17 serves as the catalytic Proton acceptor. TRNA is bound by residues Tyr61, Asn63, and Asn109.

It belongs to the PTH family. In terms of assembly, monomer.

It localises to the cytoplasm. The enzyme catalyses an N-acyl-L-alpha-aminoacyl-tRNA + H2O = an N-acyl-L-amino acid + a tRNA + H(+). Its function is as follows. Hydrolyzes ribosome-free peptidyl-tRNAs (with 1 or more amino acids incorporated), which drop off the ribosome during protein synthesis, or as a result of ribosome stalling. In terms of biological role, catalyzes the release of premature peptidyl moieties from peptidyl-tRNA molecules trapped in stalled 50S ribosomal subunits, and thus maintains levels of free tRNAs and 50S ribosomes. The protein is Peptidyl-tRNA hydrolase of Borrelia garinii subsp. bavariensis (strain ATCC BAA-2496 / DSM 23469 / PBi) (Borreliella bavariensis).